The sequence spans 376 residues: Lipoyl synthase, mitochondrial (376 aa).

Residues C103, C108, C114, C134, C138, C141, and S349 each coordinate [4Fe-4S] cluster. The 220-residue stretch at 119-338 (EHGTQTATIM…EDRGNQLGFL (220 aa)) folds into the Radical SAM core domain.

This sequence belongs to the radical SAM superfamily. Lipoyl synthase family. The cofactor is [4Fe-4S] cluster.

It is found in the mitochondrion. The enzyme catalyses [[Fe-S] cluster scaffold protein carrying a second [4Fe-4S](2+) cluster] + N(6)-octanoyl-L-lysyl-[protein] + 2 oxidized [2Fe-2S]-[ferredoxin] + 2 S-adenosyl-L-methionine + 4 H(+) = [[Fe-S] cluster scaffold protein] + N(6)-[(R)-dihydrolipoyl]-L-lysyl-[protein] + 4 Fe(3+) + 2 hydrogen sulfide + 2 5'-deoxyadenosine + 2 L-methionine + 2 reduced [2Fe-2S]-[ferredoxin]. It functions in the pathway protein modification; protein lipoylation via endogenous pathway; protein N(6)-(lipoyl)lysine from octanoyl-[acyl-carrier-protein]: step 2/2. Its function is as follows. Catalyzes the radical-mediated insertion of two sulfur atoms into the C-6 and C-8 positions of the octanoyl moiety bound to the lipoyl domains of lipoate-dependent enzymes, thereby converting the octanoylated domains into lipoylated derivatives. This chain is Lipoyl synthase, mitochondrial, found in Drosophila ananassae (Fruit fly).